The sequence spans 467 residues: UDP-N-acetylmuramoylalanine--D-glutamate ligase (467 aa).

An ATP-binding site is contributed by 115 to 121 (GTDGKTT).

It belongs to the MurCDEF family.

The protein localises to the cytoplasm. The enzyme catalyses UDP-N-acetyl-alpha-D-muramoyl-L-alanine + D-glutamate + ATP = UDP-N-acetyl-alpha-D-muramoyl-L-alanyl-D-glutamate + ADP + phosphate + H(+). It functions in the pathway cell wall biogenesis; peptidoglycan biosynthesis. Its function is as follows. Cell wall formation. Catalyzes the addition of glutamate to the nucleotide precursor UDP-N-acetylmuramoyl-L-alanine (UMA). The polypeptide is UDP-N-acetylmuramoylalanine--D-glutamate ligase (Chlorobaculum parvum (strain DSM 263 / NCIMB 8327) (Chlorobium vibrioforme subsp. thiosulfatophilum)).